The following is a 276-amino-acid chain: Cell division protein FtsQ (276 aa).

At 1-11 (MQYILKLKYYL) the chain is on the cytoplasmic side. Residues 12-32 (YNITWKLVFICVMLVLLIVGI) form a helical membrane-spanning segment. The Periplasmic segment spans residues 33 to 276 (HKNIKWVCDY…NVSKGSHDYD (244 aa)). The POTRA domain maps to 45–115 (GPLSYIIVTG…NTLKINLIEY (71 aa)).

Belongs to the FtsQ/DivIB family. FtsQ subfamily. As to quaternary structure, part of a complex composed of FtsB, FtsL and FtsQ.

It localises to the cell inner membrane. Its function is as follows. Essential cell division protein. May link together the upstream cell division proteins, which are predominantly cytoplasmic, with the downstream cell division proteins, which are predominantly periplasmic. May control correct divisome assembly. The polypeptide is Cell division protein FtsQ (Blochmanniella floridana).